Reading from the N-terminus, the 193-residue chain is Interferon lambda-2 (193 aa).

Residues M1–A19 form the signal peptide. N105 carries an N-linked (GlcNAc...) asparagine glycan.

This sequence belongs to the lambda interferon family.

It is found in the secreted. Its function is as follows. Cytokine with antiviral, antitumour and immunomodulatory activities. Plays a critical role in the antiviral host defense, predominantly in the epithelial tissues. Acts as a ligand for the heterodimeric class II cytokine receptor composed of IL10RB and IFNLR1, and receptor engagement leads to the activation of the JAK/STAT signaling pathway resulting in the expression of IFN-stimulated genes (ISG), which mediate the antiviral state. Has a restricted receptor distribution and therefore restricted targets: is primarily active in epithelial cells and this cell type-selective action is because of the epithelial cell-specific expression of its receptor IFNLR1. Seems not to be essential for early virus-activated host defense in vaginal infection, but plays an important role in Toll-like receptor (TLR)-induced antiviral defense. Plays a significant role in the antiviral immune defense in the intestinal epithelium. Exerts an immunomodulatory effect by up-regulating MHC class I antigen expression. This chain is Interferon lambda-2 (Ifnl2), found in Mus musculus (Mouse).